Here is a 46-residue protein sequence, read N- to C-terminus: Large ribosomal subunit protein bL36 (46 aa).

The protein belongs to the bacterial ribosomal protein bL36 family.

This is Large ribosomal subunit protein bL36 from Serratia proteamaculans (strain 568).